The primary structure comprises 874 residues: Coatomer subunit gamma-1 (874 aa).

The span at 1–11 (MLKKFDKKDEE) shows a compositional bias: basic and acidic residues. The interval 1-21 (MLKKFDKKDEESGGGSNPLQH) is disordered. 4 HEAT repeats span residues 64–101 (TEATEAFFAMTKLFQSNDPTLRRMCYLTIKEMSCIAED), 283–320 (KELAPAVSVLQLFCSSPKAALRYAAVRTLNKVAMKHPS), 322–355 (VTACNLDLENLVTDSNRSIATLAITTLLKTGSES), and 356–392 (SIDRLMKQISSFMSEISDEFKVVVVQAISALCQKYPR). Thr-594 bears the Phosphothreonine mark. The tract at residues 609–874 (RQEIFQEQLA…PVDIILASVG (266 aa)) is interaction with ZNF289/ARFGAP2.

It belongs to the COPG family. As to quaternary structure, oligomeric complex that consists of at least the alpha, beta, beta', gamma, delta, epsilon and zeta subunits. Interacts with ZNF289/ARFGAP2 through its C-terminal appendage domain. Interacts with EGFR upon EGF treatment; interaction is essential for regulation of EGF-dependent nuclear transport of EGFR by retrograde trafficking from the Golgi to the ER. The coatomer interacts with KDEL receptors; the interaction is important for retrograde trafficking of KDEL-bearing proteins from the Golgi to the endoplasmic reticulum. Interacts with COPB1. Interacts with TMED10 (via C-terminus). Interacts with TMED2, TMED3, TMED7 and TMED9.

The protein localises to the cytoplasm. Its subcellular location is the cytosol. It is found in the golgi apparatus membrane. It localises to the cytoplasmic vesicle. The protein resides in the COPI-coated vesicle membrane. In terms of biological role, the coatomer is a cytosolic protein complex that binds to dilysine motifs and reversibly associates with Golgi non-clathrin-coated vesicles, which further mediate biosynthetic protein transport from the ER, via the Golgi up to the trans Golgi network. Coatomer complex is required for budding from Golgi membranes, and is essential for the retrograde Golgi-to-ER transport of dilysine-tagged proteins. In mammals, the coatomer can only be recruited by membranes associated to ADP-ribosylation factors (ARFs), which are small GTP-binding proteins; the complex also influences the Golgi structural integrity, as well as the processing, activity, and endocytic recycling of LDL receptors. Required for limiting lipid storage in lipid droplets. Involved in lipid homeostasis by regulating the presence of perilipin family members PLIN2 and PLIN3 at the lipid droplet surface and promoting the association of adipocyte triglyceride lipase (PNPLA2) with the lipid droplet surface to mediate lipolysis. The polypeptide is Coatomer subunit gamma-1 (Copg1) (Mus musculus (Mouse)).